The following is a 361-amino-acid chain: Peptide chain release factor 1 (361 aa).

Position 237 is an N5-methylglutamine (Q237). Positions 285 to 306 are disordered; that stretch reads QAEQSAQQTEQRRQLVGSGDRS.

The protein belongs to the prokaryotic/mitochondrial release factor family. Post-translationally, methylated by PrmC. Methylation increases the termination efficiency of RF1.

Its subcellular location is the cytoplasm. In terms of biological role, peptide chain release factor 1 directs the termination of translation in response to the peptide chain termination codons UAG and UAA. This chain is Peptide chain release factor 1, found in Alkalilimnicola ehrlichii (strain ATCC BAA-1101 / DSM 17681 / MLHE-1).